The following is a 299-amino-acid chain: KATNB1-like protein 1 (299 aa).

The Nuclear localization signal motif lies at 8–15 (VKKRNFSN). Ser-56 carries the post-translational modification Phosphoserine.

Interacts with KATNA1 and KATNAL1; these interactions are competed by KATNB1 which has a higher affinity for them.

It is found in the nucleus. The protein resides in the cytoplasm. The protein localises to the cytoskeleton. Its subcellular location is the spindle pole. Regulates microtubule-severing activity of KATNAL1 in a concentration-dependent manner in vitro. The polypeptide is KATNB1-like protein 1 (Katnbl1) (Mus musculus (Mouse)).